The primary structure comprises 500 residues: Cholesterol 24-hydroxylase (500 aa).

Residues 3–23 (PGLLLLGSAVLLAFGLCCTFV) traverse the membrane as a helical segment. Cysteine 437 lines the heme pocket.

This sequence belongs to the cytochrome P450 family. Heme serves as cofactor. As to expression, expressed in high level in the pyramidal cells of the hippocampus, Purkinje cells of the cerebellum, and neuronal cell bodies in layers II/III, V, and VI of the cortex. Expressed in hippocampal and cerebellar interneurons, in retinal ganglion cells, and in a subset of retinal cells localized to the inner nuclear layer (at protein level).

Its subcellular location is the endoplasmic reticulum membrane. It localises to the microsome membrane. The protein resides in the postsynapse. The protein localises to the presynapse. It is found in the cell projection. Its subcellular location is the dendrite. It catalyses the reaction cholesterol + reduced [NADPH--hemoprotein reductase] + O2 = (24S)-hydroxycholesterol + oxidized [NADPH--hemoprotein reductase] + H2O + H(+). The enzyme catalyses cholestanol + reduced [NADPH--hemoprotein reductase] + O2 = (24S)-hydroxycholestanol + oxidized [NADPH--hemoprotein reductase] + H2O + H(+). It carries out the reaction 7-dehydrocholesterol + reduced [NADPH--hemoprotein reductase] + O2 = cholesta-5,7-dien-3beta,24S-diol + oxidized [NADPH--hemoprotein reductase] + H2O + H(+). The catalysed reaction is 7-dehydrocholesterol + reduced [NADPH--hemoprotein reductase] + O2 = cholesta-5,7-dien-3beta,25-diol + oxidized [NADPH--hemoprotein reductase] + H2O + H(+). It catalyses the reaction desmosterol + reduced [NADPH--hemoprotein reductase] + O2 = (24Z),26-hydroxydesmosterol + oxidized [NADPH--hemoprotein reductase] + H2O + H(+). The enzyme catalyses desmosterol + reduced [NADPH--hemoprotein reductase] + O2 = (24S)-25-epoxycholesterol + oxidized [NADPH--hemoprotein reductase] + H2O + H(+). It carries out the reaction 4beta-hydroxycholesterol + reduced [NADPH--hemoprotein reductase] + O2 = 4beta,24S-dihydroxycholesterol + oxidized [NADPH--hemoprotein reductase] + H2O + H(+). The catalysed reaction is (24S)-hydroxycholesterol + reduced [NADPH--hemoprotein reductase] + O2 = (24S,25R)-24,26-dihydroxycholesterol + oxidized [NADPH--hemoprotein reductase] + H2O + H(+). It catalyses the reaction (24S)-hydroxycholesterol + reduced [NADPH--hemoprotein reductase] + O2 = 24S,25-dihydroxycholesterol + oxidized [NADPH--hemoprotein reductase] + H2O + H(+). The enzyme catalyses 7alpha-hydroxycholesterol + reduced [NADPH--hemoprotein reductase] + O2 = (24S)-7alpha-dihydroxycholesterol + oxidized [NADPH--hemoprotein reductase] + H2O + H(+). It carries out the reaction progesterone + reduced [NADPH--hemoprotein reductase] + O2 = 17alpha-hydroxyprogesterone + oxidized [NADPH--hemoprotein reductase] + H2O + H(+). The catalysed reaction is testosterone + reduced [NADPH--hemoprotein reductase] + O2 = 16beta,17beta-dihydroxyandrost-4-en-3-one + oxidized [NADPH--hemoprotein reductase] + H2O + H(+). It catalyses the reaction testosterone + reduced [NADPH--hemoprotein reductase] + O2 = 2-hydroxytestosterone + oxidized [NADPH--hemoprotein reductase] + H2O + H(+). The enzyme catalyses testosterone + reduced [NADPH--hemoprotein reductase] + O2 = 6beta,17beta-dihydroxyandrost-4-en-3-one + oxidized [NADPH--hemoprotein reductase] + H2O + H(+). It participates in steroid metabolism; cholesterol degradation. It functions in the pathway lipid metabolism; C21-steroid hormone metabolism. Functionally, P450 monooxygenase that plays a major role in cholesterol homeostasis in the brain. Primarily catalyzes the hydroxylation (with S stereochemistry) at C-24 of cholesterol side chain, triggering cholesterol diffusion out of neurons and its further degradation. By promoting constant cholesterol elimination in neurons, may activate the mevalonate pathway and coordinate the synthesis of new cholesterol and nonsterol isoprenoids involved in synaptic activity and learning. Further hydroxylates cholesterol derivatives and hormone steroids on both the ring and side chain of these molecules, converting them into active oxysterols involved in lipid signaling and biosynthesis. Acts as an epoxidase converting cholesta-5,24-dien-3beta-ol/desmosterol into (24S),25-epoxycholesterol, an abundant lipid ligand of nuclear NR1H2 and NR1H3 receptors shown to promote neurogenesis in developing brain. May also catalyze the oxidative metabolism of xenobiotics, such as clotrimazole. The sequence is that of Cholesterol 24-hydroxylase from Mus musculus (Mouse).